The following is a 312-amino-acid chain: HPr kinase/phosphorylase (312 aa).

Catalysis depends on residues His-139 and Lys-160. Gly-154–Ser-161 is an ATP binding site. Ser-161 contacts Mg(2+). The Proton acceptor; for phosphorylation activity. Proton donor; for dephosphorylation activity role is filled by Asp-178. An important for the catalytic mechanism of both phosphorylation and dephosphorylation region spans residues Leu-202–Asn-211. Glu-203 is a Mg(2+) binding site. The active site involves Arg-244. The tract at residues Pro-265 to Arg-270 is important for the catalytic mechanism of dephosphorylation.

It belongs to the HPrK/P family. As to quaternary structure, homohexamer. The cofactor is Mg(2+).

It catalyses the reaction [HPr protein]-L-serine + ATP = [HPr protein]-O-phospho-L-serine + ADP + H(+). The catalysed reaction is [HPr protein]-O-phospho-L-serine + phosphate + H(+) = [HPr protein]-L-serine + diphosphate. Functionally, catalyzes the ATP- as well as the pyrophosphate-dependent phosphorylation of a specific serine residue in HPr, a phosphocarrier protein of the phosphoenolpyruvate-dependent sugar phosphotransferase system (PTS). HprK/P also catalyzes the pyrophosphate-producing, inorganic phosphate-dependent dephosphorylation (phosphorolysis) of seryl-phosphorylated HPr (P-Ser-HPr). The two antagonistic activities of HprK/P are regulated by several intracellular metabolites, which change their concentration in response to the absence or presence of rapidly metabolisable carbon sources (glucose, fructose, etc.) in the growth medium. Therefore, by controlling the phosphorylation state of HPr, HPrK/P is a sensor enzyme that plays a major role in the regulation of carbon metabolism and sugar transport: it mediates carbon catabolite repression (CCR), and regulates PTS-catalyzed carbohydrate uptake and inducer exclusion. In Listeria welshimeri serovar 6b (strain ATCC 35897 / DSM 20650 / CCUG 15529 / CIP 8149 / NCTC 11857 / SLCC 5334 / V8), this protein is HPr kinase/phosphorylase.